The chain runs to 361 residues: GDSL esterase/lipase At2g40250 (361 aa).

The first 28 residues, 1–28, serve as a signal peptide directing secretion; that stretch reads MNRNQHKPMFVTFLINILLLQLLNLTNA. The active-site Nucleophile is the Ser-43. Catalysis depends on residues Asp-337 and His-340.

Belongs to the 'GDSL' lipolytic enzyme family.

It is found in the secreted. The sequence is that of GDSL esterase/lipase At2g40250 from Arabidopsis thaliana (Mouse-ear cress).